We begin with the raw amino-acid sequence, 186 residues long: Putative 3-methyladenine DNA glycosylase (186 aa).

It belongs to the DNA glycosylase MPG family.

This is Putative 3-methyladenine DNA glycosylase from Borreliella afzelii (strain PKo) (Borrelia afzelii).